The following is a 245-amino-acid chain: Actin-like protein 10 (245 aa).

The protein belongs to the actin family.

The chain is Actin-like protein 10 (ACTL10) from Homo sapiens (Human).